A 357-amino-acid chain; its full sequence is Phenylalanine--tRNA ligase alpha subunit (357 aa).

Glu-257 contacts Mg(2+).

The protein belongs to the class-II aminoacyl-tRNA synthetase family. Phe-tRNA synthetase alpha subunit type 1 subfamily. As to quaternary structure, tetramer of two alpha and two beta subunits. Mg(2+) serves as cofactor.

The protein resides in the cytoplasm. It carries out the reaction tRNA(Phe) + L-phenylalanine + ATP = L-phenylalanyl-tRNA(Phe) + AMP + diphosphate + H(+). The sequence is that of Phenylalanine--tRNA ligase alpha subunit from Roseobacter denitrificans (strain ATCC 33942 / OCh 114) (Erythrobacter sp. (strain OCh 114)).